Here is a 511-residue protein sequence, read N- to C-terminus: MTSTPKPLVLIILDGFGHSDIPEHNAIFAANKPVYDRLCATQPHGLISGSGMDVGLPDGQMGNSEVGHMNLGAGRVVYQDFTRVTKAIRDGEFFENPVLTGAVDKAVGAGKAVHILGLLSDGGVHSHQDHLVAMAELAAQRGAEKIYLHAFLDGRDTPPRSAQSSIELLDATFAKLGKGRIASLIGRYYAMDRDNRWDRVSAAYNLIVDSAAEYTADTALAGLEAAYARDESDEFVKATRIGEAVKVEDGDAVIFMNFRADRARELSRAFVEPDFTEFARARLPKMAAYIGLTQYSAKIPAPAAFAPSSLNNVLGEYLAKNGKTQLRIAETEKYAHVTFFFSGGREEPFEGEERILIPSPKVATYDLQPEMSAPEVTDRIVEAIEQQRFDVIVVNYANGDMVGHTGVFEAAVKAVEALDTCVGRIVDALDKVGGEALITADHGNVEQMEDECTGQAHTAHTTEPVPFIYVGKRNVKVREGGVLADVAPTMLKLLGLEKPVEMTGTSILVDA.

The Mn(2+) site is built by Asp-14 and Ser-64. Catalysis depends on Ser-64, which acts as the Phosphoserine intermediate. Substrate is bound by residues His-125, Arg-155–Asp-156, Arg-187, Arg-193, Arg-259–Arg-262, and Lys-333. The Mn(2+) site is built by Asp-400, His-404, Asp-441, His-442, and His-460.

It belongs to the BPG-independent phosphoglycerate mutase family. As to quaternary structure, monomer. Mn(2+) is required as a cofactor.

It carries out the reaction (2R)-2-phosphoglycerate = (2R)-3-phosphoglycerate. It participates in carbohydrate degradation; glycolysis; pyruvate from D-glyceraldehyde 3-phosphate: step 3/5. Functionally, catalyzes the interconversion of 2-phosphoglycerate and 3-phosphoglycerate. This Pseudomonas putida (strain ATCC 47054 / DSM 6125 / CFBP 8728 / NCIMB 11950 / KT2440) protein is 2,3-bisphosphoglycerate-independent phosphoglycerate mutase.